The following is a 280-amino-acid chain: Acetyl-coenzyme A carboxylase carboxyl transferase subunit beta (280 aa).

The CoA carboxyltransferase N-terminal domain occupies 25-280; the sequence is VMRECPICHA…RLHTKENAYG (256 aa). Residues Cys-29, Cys-32, Cys-47, and Cys-50 each contribute to the Zn(2+) site. The segment at 29–50 adopts a C4-type zinc-finger fold; sequence CPICHAKFLSMRLGRDHTCPKC.

This sequence belongs to the AccD/PCCB family. In terms of assembly, acetyl-CoA carboxylase is a heterohexamer composed of biotin carboxyl carrier protein (AccB), biotin carboxylase (AccC) and two subunits each of ACCase subunit alpha (AccA) and ACCase subunit beta (AccD). Zn(2+) is required as a cofactor.

Its subcellular location is the cytoplasm. The catalysed reaction is N(6)-carboxybiotinyl-L-lysyl-[protein] + acetyl-CoA = N(6)-biotinyl-L-lysyl-[protein] + malonyl-CoA. Its pathway is lipid metabolism; malonyl-CoA biosynthesis; malonyl-CoA from acetyl-CoA: step 1/1. Component of the acetyl coenzyme A carboxylase (ACC) complex. Biotin carboxylase (BC) catalyzes the carboxylation of biotin on its carrier protein (BCCP) and then the CO(2) group is transferred by the transcarboxylase to acetyl-CoA to form malonyl-CoA. This chain is Acetyl-coenzyme A carboxylase carboxyl transferase subunit beta, found in Lactobacillus helveticus (strain DPC 4571).